The chain runs to 161 residues: Allophycocyanin alpha chain (161 aa).

The residue at position 71 (asparagine 71) is an N4-methylasparagine. Residue cysteine 81 coordinates (2R,3E)-phycocyanobilin.

This sequence belongs to the phycobiliprotein family. Heterodimer of an alpha and a beta chain. Post-translationally, contains one covalently linked phycocyanobilin chromophore.

It localises to the cellular thylakoid membrane. Its function is as follows. Light-harvesting photosynthetic bile pigment-protein from the phycobiliprotein complex. Allophycocyanin has a maximum absorption at approximately 650 nanometers. This Synechocystis sp. (strain PCC 6714) (Aphanocapsa sp. (strain PCC 6714)) protein is Allophycocyanin alpha chain (apcA).